A 219-amino-acid chain; its full sequence is MKNWTDVIGKEKEQPYFQHALQQVHLARANGKTIYPPQEEVFNAFKYTAFEDVKVVILGQDPYHGANQAHGLAFSVKPEVAIPPSLLNMYKELTQDISGFQMPSNGYLVKWAEQGVLLLNTVLTVERGMAHSHANLGWERFTDKVIAVLNEHREKLVFLLWGSHAQKKDKLIDRTRHLVLTAPHPSPLSAHRGFFGCHHFSKTNSYLESNGMKPIDWQI.

The active-site Proton acceptor is the Asp61.

The protein belongs to the uracil-DNA glycosylase (UDG) superfamily. UNG family.

It localises to the cytoplasm. It carries out the reaction Hydrolyzes single-stranded DNA or mismatched double-stranded DNA and polynucleotides, releasing free uracil.. Functionally, excises uracil residues from the DNA which can arise as a result of misincorporation of dUMP residues by DNA polymerase or due to deamination of cytosine. The polypeptide is Uracil-DNA glycosylase (Haemophilus influenzae (strain PittEE)).